Consider the following 132-residue polypeptide: MHILDSLLAFSAYFFIGVAMVIIFLFIYSKITPHNEWQLIKNNNTAASLAFSGTLLGYVIPLSSAAINAVSIPDYFAWGGIALVIQLLVFAGVRLYMPALSEKIINHNTAAGMFMGTAALAGGIFNAACMTW.

Over 1 to 6 (MHILDS) the chain is Periplasmic. A helical membrane pass occupies residues 7 to 27 (LLAFSAYFFIGVAMVIIFLFI). Residues 28–46 (YSKITPHNEWQLIKNNNTA) lie on the Cytoplasmic side of the membrane. A helical transmembrane segment spans residues 47 to 67 (ASLAFSGTLLGYVIPLSSAAI). Topologically, residues 68-71 (NAVS) are periplasmic. A helical transmembrane segment spans residues 72 to 92 (IPDYFAWGGIALVIQLLVFAG). At 93–109 (VRLYMPALSEKIINHNT) the chain is on the cytoplasmic side. The helical transmembrane segment at 110-130 (AAGMFMGTAALAGGIFNAACM) threads the bilayer. Topologically, residues 131 to 132 (TW) are periplasmic.

Belongs to the UPF0719 family.

The protein resides in the cell inner membrane. The protein is UPF0719 inner membrane protein YjfL (yjfL) of Escherichia coli O157:H7.